The primary structure comprises 136 residues: NADPH-dependent 7-cyano-7-deazaguanine reductase (136 aa).

The active-site Thioimide intermediate is Cys-53. Asp-60 (proton donor) is an active-site residue. Substrate contacts are provided by residues 75–77 and 94–95; these read VEL and HE.

Belongs to the GTP cyclohydrolase I family. QueF type 1 subfamily.

The protein resides in the cytoplasm. The enzyme catalyses 7-aminomethyl-7-carbaguanine + 2 NADP(+) = 7-cyano-7-deazaguanine + 2 NADPH + 3 H(+). The protein operates within tRNA modification; tRNA-queuosine biosynthesis. Catalyzes the NADPH-dependent reduction of 7-cyano-7-deazaguanine (preQ0) to 7-aminomethyl-7-deazaguanine (preQ1). The chain is NADPH-dependent 7-cyano-7-deazaguanine reductase from Trichormus variabilis (strain ATCC 29413 / PCC 7937) (Anabaena variabilis).